A 257-amino-acid chain; its full sequence is Acetyl-coenzyme A carboxylase carboxyl transferase subunit beta (257 aa).

The region spanning 5-257 (VFTKCERCKQ…DLERLLGFVG (253 aa)) is the CoA carboxyltransferase N-terminal domain. Zn(2+) is bound by residues C9, C12, C28, and C31. The segment at 9-31 (CERCKQPVYEKDLRARFNVCPNC) adopts a C4-type zinc-finger fold.

The protein belongs to the AccD/PCCB family. As to quaternary structure, acetyl-CoA carboxylase is a heterohexamer composed of biotin carboxyl carrier protein (AccB), biotin carboxylase (AccC) and two subunits each of ACCase subunit alpha (AccA) and ACCase subunit beta (AccD). The cofactor is Zn(2+).

It is found in the cytoplasm. The enzyme catalyses N(6)-carboxybiotinyl-L-lysyl-[protein] + acetyl-CoA = N(6)-biotinyl-L-lysyl-[protein] + malonyl-CoA. The protein operates within lipid metabolism; malonyl-CoA biosynthesis; malonyl-CoA from acetyl-CoA: step 1/1. In terms of biological role, component of the acetyl coenzyme A carboxylase (ACC) complex. Biotin carboxylase (BC) catalyzes the carboxylation of biotin on its carrier protein (BCCP) and then the CO(2) group is transferred by the transcarboxylase to acetyl-CoA to form malonyl-CoA. This is Acetyl-coenzyme A carboxylase carboxyl transferase subunit beta from Rubrobacter xylanophilus (strain DSM 9941 / JCM 11954 / NBRC 16129 / PRD-1).